The following is a 377-amino-acid chain: F-box protein At1g11810 (377 aa).

Residues 2-48 form the F-box domain; the sequence is TTTMSTLPVVLVDEILARVPITSLRSLRSTCKKWEASSKTNLVGGKA.

This chain is F-box protein At1g11810, found in Arabidopsis thaliana (Mouse-ear cress).